The chain runs to 160 residues: 6,7-dimethyl-8-ribityllumazine synthase (160 aa).

Residues tryptophan 28, 59–61 (SFE), and 82–84 (VII) contribute to the 5-amino-6-(D-ribitylamino)uracil site. Residue 87 to 88 (GT) participates in (2S)-2-hydroxy-3-oxobutyl phosphate binding. Histidine 90 functions as the Proton donor in the catalytic mechanism. Phenylalanine 115 contributes to the 5-amino-6-(D-ribitylamino)uracil binding site. Arginine 129 contributes to the (2S)-2-hydroxy-3-oxobutyl phosphate binding site.

The protein belongs to the DMRL synthase family.

The catalysed reaction is (2S)-2-hydroxy-3-oxobutyl phosphate + 5-amino-6-(D-ribitylamino)uracil = 6,7-dimethyl-8-(1-D-ribityl)lumazine + phosphate + 2 H2O + H(+). Its pathway is cofactor biosynthesis; riboflavin biosynthesis; riboflavin from 2-hydroxy-3-oxobutyl phosphate and 5-amino-6-(D-ribitylamino)uracil: step 1/2. In terms of biological role, catalyzes the formation of 6,7-dimethyl-8-ribityllumazine by condensation of 5-amino-6-(D-ribitylamino)uracil with 3,4-dihydroxy-2-butanone 4-phosphate. This is the penultimate step in the biosynthesis of riboflavin. The protein is 6,7-dimethyl-8-ribityllumazine synthase of Clavibacter sepedonicus (Clavibacter michiganensis subsp. sepedonicus).